The sequence spans 109 residues: MSNLNPCMTCGACCAFFRVSFYWAEADDAGGTIPARLTEQISPFHRCMSGTNQKNPRCIALAGTPGKNACCTIYKNRSSTCREFAMSGENGVVNEACNRARAKYGLTPL.

To A.calcoaceticus putative ferredoxin.

This is an uncharacterized protein from Escherichia coli O157:H7.